Here is a 344-residue protein sequence, read N- to C-terminus: Follistatin (344 aa).

A signal peptide spans 1–29 (MVRARHQPGGLCLLLLLLCQFMEDRSAQA). A TB domain is found at 30 to 103 (GNCWLRQAKN…TCENVDCGPG (74 aa)). Cystine bridges form between Cys-32–Cys-55, Cys-42–Cys-88, Cys-56–Cys-91, Cys-95–Cys-106, Cys-100–Cys-116, Cys-118–Cys-150, Cys-122–Cys-143, Cys-132–Cys-164, Cys-168–Cys-179, Cys-173–Cys-189, Cys-192–Cys-225, Cys-196–Cys-218, Cys-207–Cys-239, Cys-245–Cys-256, Cys-250–Cys-267, Cys-270–Cys-302, Cys-274–Cys-295, and Cys-284–Cys-316. The 24-residue stretch at 94 to 117 (TCENVDCGPGKKCRMNKKNKPRCV) folds into the Follistatin-like 1 domain. The 55-residue stretch at 112–166 (NKPRCVCAPDCSNITWKGPVCGLDGKTYRNECALLKARCKEQPELEVQYQGRCKK) folds into the Kazal-like 1 domain. Asn-124 is a glycosylation site (N-linked (GlcNAc...) asparagine). One can recognise a Follistatin-like 2 domain in the interval 167–190 (TCRDVFCPGSSTCVVDQTNNAYCV). A Kazal-like 2 domain is found at 186–241 (NAYCVTCNRICPEPASSEQYLCGNDGVTYSSACHLRKATCLLGRSIGLAYEGKCIK). In terms of domain architecture, Follistatin-like 3 spans 244 to 268 (SCEDIQCTGGKKCLWDFKVGRGRCS). In terms of domain architecture, Kazal-like 3 spans 264–318 (RGRCSLCDELCPDSKSDEPVCASDNATYASECAMKEAACSSGVLLEVKHSGSCNS). N-linked (GlcNAc...) asparagine glycosylation occurs at Asn-288. Residues 314–344 (GSCNSISEDTEEEEEDEDQDYSFPISSILEW) form a disordered region. Residues 321–333 (EDTEEEEEDEDQD) are compositionally biased toward acidic residues.

In terms of assembly, interacts with GDF11. Interacts with activin A/INHBA. Interacts with MYOSTATIN/MSTN. As to expression, isoform 1 is the predominant isoform in serum but is undetectable in follicular fluid. In the embryo, strong expression is seen in the palatal epithelia, including the medial edge epithelial and midline epithelial seam of the palatal shelves. Less pronounced expression is also seen throughout the palatal shelf and tongue mesenchyme.

The protein resides in the secreted. Its subcellular location is the nucleus. It is found in the nucleolus. Multifunctional regulatory protein whose primary function is to antagonize members of the transforming growth factor beta (TGF-beta) superfamily including activin, myostatin, GDF11 or bone morphogenetic proteins (BMPs). Mechanistically, binds to these ligands in the extracellular space, blocking their type II receptor-binding site to inhibit downstream signaling. Plays an essential role in muscle fiber formation and growth both by preventing the repressive effects of myostatin and through SMAD3/AKT/mTOR signaling independently of myostatin. Also promotes neural differentiation by antagonizing the action BMP4. Acts as a specific inhibitor of the biosynthesis and secretion of pituitary follicle stimulating hormone (FSH) by sequestering activin A/INHBA. On the other hand, translocates into the nucleus where it down-regulates rRNA synthesis and ribosome biogenesis to maintain cellular energy homeostasis by binding to rDNA. This Homo sapiens (Human) protein is Follistatin.